The following is a 189-amino-acid chain: MGDKIFHNLSGKTLVATPHVITKGIYHKSLIYMLSHTEEGAIGLIFNRLVNHIDLKSFFKIKNDKITTPVMVPIYLGGPIEHEKGFFLHSSDYNKNLLLDFHNDLAVSSNLEISEDIAFGKGPKNSLFIVGYTAWKPGQLEEELEKNLWLVMDCNKEFIFADNPESKWHNALKHLGIDEIHFSSQIGNA.

This sequence belongs to the UPF0301 (AlgH) family.

In Rickettsia massiliae (strain Mtu5), this protein is UPF0301 protein RMA_0049.